A 392-amino-acid chain; its full sequence is Tryptophan synthase beta chain (392 aa).

The residue at position 86 (lysine 86) is an N6-(pyridoxal phosphate)lysine.

The protein belongs to the TrpB family. As to quaternary structure, tetramer of two alpha and two beta chains. Pyridoxal 5'-phosphate serves as cofactor.

It carries out the reaction (1S,2R)-1-C-(indol-3-yl)glycerol 3-phosphate + L-serine = D-glyceraldehyde 3-phosphate + L-tryptophan + H2O. Its pathway is amino-acid biosynthesis; L-tryptophan biosynthesis; L-tryptophan from chorismate: step 5/5. Functionally, the beta subunit is responsible for the synthesis of L-tryptophan from indole and L-serine. The protein is Tryptophan synthase beta chain (trpB) of Buchnera aphidicola subsp. Melaphis rhois.